We begin with the raw amino-acid sequence, 210 residues long: Thymidylate kinase (210 aa).

9-16 is an ATP binding site; that stretch reads GLEGAGKS.

The protein belongs to the thymidylate kinase family.

It carries out the reaction dTMP + ATP = dTDP + ADP. In terms of biological role, phosphorylation of dTMP to form dTDP in both de novo and salvage pathways of dTTP synthesis. The protein is Thymidylate kinase of Aliivibrio salmonicida (strain LFI1238) (Vibrio salmonicida (strain LFI1238)).